The primary structure comprises 447 residues: N-succinylarginine dihydrolase (447 aa).

Substrate-binding positions include 19–28, Asn110, and 137–138; these read AGLSFGNEAS and HR. Residue Glu174 is part of the active site. Arg213 is a substrate binding site. Residue His249 is part of the active site. Substrate is bound by residues Asp251 and Asn364. Catalysis depends on Cys370, which acts as the Nucleophile.

This sequence belongs to the succinylarginine dihydrolase family. In terms of assembly, homodimer.

The enzyme catalyses N(2)-succinyl-L-arginine + 2 H2O + 2 H(+) = N(2)-succinyl-L-ornithine + 2 NH4(+) + CO2. It participates in amino-acid degradation; L-arginine degradation via AST pathway; L-glutamate and succinate from L-arginine: step 2/5. Functionally, catalyzes the hydrolysis of N(2)-succinylarginine into N(2)-succinylornithine, ammonia and CO(2). This Yersinia enterocolitica serotype O:8 / biotype 1B (strain NCTC 13174 / 8081) protein is N-succinylarginine dihydrolase.